Reading from the N-terminus, the 364-residue chain is Nucleoporin SEH1 (364 aa).

6 WD repeats span residues 10–49, 55–96, 111–152, 160–210, 217–258, and 275–314; these read DHKD…EWNC, THSG…SNDK, DSRT…NLSQ, SCKL…RKYA, TVTD…KESS, and GHNS…NWKC. Residues 326 to 364 are disordered; sequence NGAAGQAGTPGAAGTPGGPASQNALQAVAGRKKAQLMPG. The span at 327 to 338 shows a compositional bias: low complexity; the sequence is GAAGQAGTPGAA. Positions 355–364 are enriched in basic residues; sequence GRKKAQLMPG.

Belongs to the WD repeat SEC13 family. In terms of assembly, component of the Nup107-160 subcomplex of the nuclear pore complex (NPC). The Nup107-160 subcomplex includes NUP160, NUP133, NUP107, NUP98, NUP85, NUP43, NUP37, SEH1 and SEC13. Component of the GATOR2 subcomplex, composed of MIOS, SEC13, SEH1L, WDR24 and WDR59. The GATOR2 complex interacts with CASTOR1 and CASTOR2; the interaction is negatively regulated by arginine. The GATOR2 complex interacts with SESN1, SESN2 and SESN3; the interaction is negatively regulated by amino acids.

Its subcellular location is the chromosome. The protein localises to the centromere. It is found in the kinetochore. The protein resides in the nucleus. It localises to the nuclear pore complex. Its subcellular location is the lysosome membrane. With respect to regulation, the GATOR2 complex is negatively regulated by the upstream amino acid sensors CASTOR1 and SESN2, which sequester the GATOR2 complex in absence of amino acids. In the presence of abundant amino acids, GATOR2 is released from CASTOR1 and SESN2 and activated. Functionally, component of the Nup107-160 subcomplex of the nuclear pore complex (NPC). The Nup107-160 subcomplex is required for the assembly of a functional NPC. The Nup107-160 subcomplex is also required for normal kinetochore microtubule attachment, mitotic progression and chromosome segregation. This subunit plays a role in recruitment of the Nup107-160 subcomplex to the kinetochore. As a component of the GATOR2 complex, functions as an activator of the amino acid-sensing branch of the mTORC1 signaling pathway. The GATOR2 complex indirectly activates mTORC1 through the inhibition of the GATOR1 subcomplex. GATOR2 probably acts as an E3 ubiquitin-protein ligase toward GATOR1. In the presence of abundant amino acids, the GATOR2 complex mediates ubiquitination of the NPRL2 core component of the GATOR1 complex, leading to GATOR1 inactivation. In the absence of amino acids, GATOR2 is inhibited, activating the GATOR1 complex. In Osmerus mordax (Rainbow smelt), this protein is Nucleoporin SEH1 (seh1l).